Reading from the N-terminus, the 175-residue chain is uncharacterized protein (175 aa).

The Extracellular segment spans residues 1 to 2 (ME). Residues 3-23 (SIILSIAIFIGVLLGTSVGAG) traverse the membrane as a helical segment. Residues 24 to 151 (SGSSISPDVD…TGISTTMNAR (128 aa)) are Cytoplasmic-facing. The interval 26-88 (SSISPDVDAG…DVGAGSGSSI (63 aa)) is disordered. The segment covering 59-78 (FSGSSTSPDVDAGSGSSTSP) has biased composition (polar residues). Residues 152-172 (VAVLITAAILSAPVTAIALLE) form a helical membrane-spanning segment. Residues 173 to 175 (ARR) lie on the Extracellular side of the membrane.

The protein resides in the membrane. This is an uncharacterized protein from Saccharomyces cerevisiae (strain ATCC 204508 / S288c) (Baker's yeast).